A 320-amino-acid polypeptide reads, in one-letter code: Small ribosomal subunit protein uS2 (320 aa).

The interval 254–320 is disordered; the sequence is GDAAKAALPV…APATTGPVSE (67 aa). Basic and acidic residues predominate over residues 272–282; sequence VSAKNEAKSDD. The span at 308–320 shows a compositional bias: low complexity; that stretch reads AEAAPATTGPVSE.

The protein belongs to the universal ribosomal protein uS2 family.

The sequence is that of Small ribosomal subunit protein uS2 from Clavibacter sepedonicus (Clavibacter michiganensis subsp. sepedonicus).